The sequence spans 203 residues: bMERB domain-containing protein 1 (203 aa).

One can recognise a bMERB domain in the interval 3–149 (LKQSLSVHLE…EQEEDKEMAD (147 aa)). A disordered region spans residues 161 to 184 (VTKTSASSRAEKKAEPPPSKPTVA).

This is bMERB domain-containing protein 1 (Bmerb1) from Mus musculus (Mouse).